A 310-amino-acid polypeptide reads, in one-letter code: Carbamate kinase 1 (310 aa).

Belongs to the carbamate kinase family.

The protein localises to the cytoplasm. It carries out the reaction hydrogencarbonate + NH4(+) + ATP = carbamoyl phosphate + ADP + H2O + H(+). It participates in metabolic intermediate metabolism; carbamoyl phosphate degradation; CO(2) and NH(3) from carbamoyl phosphate: step 1/1. This is Carbamate kinase 1 (arcC1) from Staphylococcus aureus (strain COL).